The primary structure comprises 86 residues: Large ribosomal subunit protein bL31B (86 aa).

Belongs to the bacterial ribosomal protein bL31 family. Type B subfamily. In terms of assembly, part of the 50S ribosomal subunit.

The sequence is that of Large ribosomal subunit protein bL31B from Streptococcus uberis (strain ATCC BAA-854 / 0140J).